The primary structure comprises 121 residues: Large ribosomal subunit protein uL22 (121 aa).

This sequence belongs to the universal ribosomal protein uL22 family. In terms of assembly, part of the 50S ribosomal subunit.

Functionally, this protein binds specifically to 23S rRNA; its binding is stimulated by other ribosomal proteins, e.g. L4, L17, and L20. It is important during the early stages of 50S assembly. It makes multiple contacts with different domains of the 23S rRNA in the assembled 50S subunit and ribosome. Its function is as follows. The globular domain of the protein is located near the polypeptide exit tunnel on the outside of the subunit, while an extended beta-hairpin is found that lines the wall of the exit tunnel in the center of the 70S ribosome. The sequence is that of Large ribosomal subunit protein uL22 from Kocuria rhizophila (strain ATCC 9341 / DSM 348 / NBRC 103217 / DC2201).